We begin with the raw amino-acid sequence, 403 residues long: S-adenosylmethionine synthase (403 aa).

Position 14 (H14) interacts with ATP. D16 is a binding site for Mg(2+). A K(+)-binding site is contributed by E42. Residues E55 and Q99 each coordinate L-methionine. Residues 99 to 109 (QSPEIAEGVDH) form a flexible loop region. Residues 180–182 (DAK), 250–251 (RF), D259, 265–266 (RK), A282, and K286 contribute to the ATP site. L-methionine is bound at residue D259. K290 serves as a coordination point for L-methionine.

Belongs to the AdoMet synthase family. In terms of assembly, homotetramer; dimer of dimers. Mg(2+) serves as cofactor. It depends on K(+) as a cofactor.

It localises to the cytoplasm. It carries out the reaction L-methionine + ATP + H2O = S-adenosyl-L-methionine + phosphate + diphosphate. It participates in amino-acid biosynthesis; S-adenosyl-L-methionine biosynthesis; S-adenosyl-L-methionine from L-methionine: step 1/1. Catalyzes the formation of S-adenosylmethionine (AdoMet) from methionine and ATP. The overall synthetic reaction is composed of two sequential steps, AdoMet formation and the subsequent tripolyphosphate hydrolysis which occurs prior to release of AdoMet from the enzyme. The polypeptide is S-adenosylmethionine synthase (Deinococcus deserti (strain DSM 17065 / CIP 109153 / LMG 22923 / VCD115)).